A 159-amino-acid polypeptide reads, in one-letter code: Neuroglobin (159 aa).

The Globin domain maps to 3–151; it reads KLSEKDKELI…VVAAMSQGWA (149 aa). 2 residues coordinate heme b: His-66 and His-98.

The protein belongs to the globin family. In terms of assembly, monomer. Homodimers and homotetramers. Mainly monomeric but also detected as part of homodimers and homotetramers.

The protein localises to the cytoplasm. It localises to the cytosol. Its subcellular location is the mitochondrion matrix. The catalysed reaction is Fe(III)-heme b-[protein] + nitric oxide + H2O = Fe(II)-heme b-[protein] + nitrite + 2 H(+). Functionally, monomeric globin with a bis-histidyl six-coordinate heme-iron atom through which it can bind dioxygen, carbon monoxide and nitric oxide. Could help transport oxygen and increase its availability to the metabolically active neuronal tissues, though its low quantity in tissues as well as its high affinity for dioxygen, which may limit its oxygen-releasing ability, argue against it. The ferrous/deoxygenated form exhibits a nitrite reductase activity and it could produce nitric oxide which in turn inhibits cellular respiration in response to hypoxia. In its ferrous/deoxygenated state, it may also exhibit GDI (Guanine nucleotide Dissociation Inhibitor) activity toward heterotrimeric G-alpha proteins, thereby regulating signal transduction to facilitate neuroprotective responses in the wake of hypoxia and associated oxidative stress. The sequence is that of Neuroglobin (ngb) from Dissostichus mawsoni (Antarctic cod).